Here is a 218-residue protein sequence, read N- to C-terminus: MIP18 family protein galla-1 (218 aa).

Residues 1–59 (MLSYIKRKLSESDSGVSSVATVTSSCGGDSGRAGGTGSSESGTGSSSASISGRSQNADE) form a disordered region. A compositionally biased stretch (low complexity) spans 12 to 27 (SDSGVSSVATVTSSCG). Serine 14 is subject to Phosphoserine. The span at 28 to 37 (GDSGRAGGTG) shows a compositional bias: gly residues. The span at 38 to 54 (SSESGTGSSSASISGRS) shows a compositional bias: low complexity. A Phosphoserine modification is found at serine 65.

It belongs to the MIP18 family. In terms of assembly, component of the CGX complex composed of crb, galla (galla-1 or galla-2) and Xpd. Interacts with crb (via intracellular domain). Is not able to interact with Xpd in the absence of crb.

The protein localises to the apical cell membrane. Its subcellular location is the cytoplasm. The protein resides in the cytoskeleton. It localises to the spindle. In terms of biological role, component of the crb-galla-Xpd (CGX) complex which is essential for proper mitotic chromosome segregation in early embryos. The CGX complex is also required for cell proliferation in developing wing disks. In the CGX complex, acts with crb to recruit Xpd thus forming the functional complex. The protein is MIP18 family protein galla-1 of Drosophila melanogaster (Fruit fly).